The following is a 232-amino-acid chain: 2-C-methyl-D-erythritol 4-phosphate cytidylyltransferase (232 aa).

The protein belongs to the IspD/TarI cytidylyltransferase family. IspD subfamily.

The catalysed reaction is 2-C-methyl-D-erythritol 4-phosphate + CTP + H(+) = 4-CDP-2-C-methyl-D-erythritol + diphosphate. It participates in isoprenoid biosynthesis; isopentenyl diphosphate biosynthesis via DXP pathway; isopentenyl diphosphate from 1-deoxy-D-xylulose 5-phosphate: step 2/6. Its function is as follows. Catalyzes the formation of 4-diphosphocytidyl-2-C-methyl-D-erythritol from CTP and 2-C-methyl-D-erythritol 4-phosphate (MEP). The sequence is that of 2-C-methyl-D-erythritol 4-phosphate cytidylyltransferase from Neorickettsia sennetsu (strain ATCC VR-367 / Miyayama) (Ehrlichia sennetsu).